Reading from the N-terminus, the 787-residue chain is uncharacterized protein (787 aa).

Methionine 1 carries the N-acetylmethionine modification. Disordered regions lie at residues methionine 1 to lysine 115, threonine 130 to glutamate 200, and valine 217 to aspartate 238. Residues valine 36–threonine 54 show a composition bias toward polar residues. Phosphoserine is present on serine 63. Over residues threonine 130 to histidine 142 the composition is skewed to polar residues. The segment covering serine 160 to threonine 169 has biased composition (low complexity). A compositionally biased stretch (basic and acidic residues) spans threonine 170–serine 184. The span at serine 218–asparagine 230 shows a compositional bias: low complexity. Phosphoserine is present on residues serine 254, serine 313, serine 342, serine 345, serine 390, serine 477, serine 492, serine 546, serine 683, and serine 699.

Its subcellular location is the cytoplasm. This is an uncharacterized protein from Saccharomyces cerevisiae (strain ATCC 204508 / S288c) (Baker's yeast).